The primary structure comprises 142 residues: Transcriptional regulator MraZ (142 aa).

SpoVT-AbrB domains are found at residues 5 to 47 (THTP…PTET) and 76 to 119 (ASDT…DATE).

The protein belongs to the MraZ family. Forms oligomers.

The protein localises to the cytoplasm. It localises to the nucleoid. This Cutibacterium acnes (strain DSM 16379 / KPA171202) (Propionibacterium acnes) protein is Transcriptional regulator MraZ.